A 523-amino-acid polypeptide reads, in one-letter code: GMP synthase [glutamine-hydrolyzing] (523 aa).

Residues 8 to 205 (KILILDFGSQ…VVDICGCETN (198 aa)) form the Glutamine amidotransferase type-1 domain. Residue Cys-85 is the Nucleophile of the active site. Catalysis depends on residues His-179 and Glu-181. Residues 206–398 (WTAENIIEDA…LGLPAEMLNR (193 aa)) form the GMPS ATP-PPase domain. 233–239 (SGGVDSS) provides a ligand contact to ATP.

In terms of assembly, homodimer.

It carries out the reaction XMP + L-glutamine + ATP + H2O = GMP + L-glutamate + AMP + diphosphate + 2 H(+). Its pathway is purine metabolism; GMP biosynthesis; GMP from XMP (L-Gln route): step 1/1. Catalyzes the synthesis of GMP from XMP. The polypeptide is GMP synthase [glutamine-hydrolyzing] (Histophilus somni (strain 2336) (Haemophilus somnus)).